A 253-amino-acid polypeptide reads, in one-letter code: Rab GTPase-activating protein 1-like, isoform 10 (253 aa).

A coiled-coil region spans residues 8 to 222 (SMTFEERENR…MNEIQAAKNS (215 aa)). The tract at residues 233 to 253 (TATGTQPLQPAPVTQPPKEST) is disordered.

This is Rab GTPase-activating protein 1-like, isoform 10 (RABGAP1L) from Homo sapiens (Human).